Consider the following 1787-residue polypeptide: ATP-dependent RNA helicase DEAH11, chloroplastic (1787 aa).

A chloroplast-targeting transit peptide spans 1–33 (MRNSFPPSDGGRSTTDRRQQSFPSSSTNRYNSR). The disordered stretch occupies residues 1–75 (MRNSFPPSDG…DRAPSSGFSP (75 aa)). The segment covering 20–60 (QSFPSSSTNRYNSRSAQSSPPLNHCTTWNQQHSQYHNTNFP) has biased composition (polar residues). One can recognise a Helicase ATP-binding domain in the interval 313–477 (LKKIHCEQIM…LFDCGILHVN (165 aa)). Residue 326-333 (GETGSGKS) participates in ATP binding. The DEAH box motif lies at 424–427 (DEAH). The Helicase C-terminal domain maps to 507 to 673 (DVVKMAVEIH…VALLRMLALG (167 aa)). Residues 1557–1764 (IELECPICLS…EPCYAHLRTI (208 aa)) form a TRIAD supradomain region. 18 residues coordinate Zn(2+): Cys-1561, Cys-1564, Cys-1577, His-1579, Cys-1582, Cys-1585, Cys-1604, Cys-1609, Cys-1649, Cys-1654, Cys-1672, Cys-1675, Cys-1680, Cys-1683, His-1688, Cys-1693, Cys-1719, and Cys-1722. The segment at 1561–1609 (CPICLSEVDDGYSLEGCSHLFCKACLLEQFEASMRNFDAFPILCSHIDC) adopts an RING-type 1 zinc-finger fold. Residues 1628–1693 (DELISASLSA…HLEYHPLITC (66 aa)) form an IBR-type zinc finger. The RING-type 2; atypical zinc finger occupies 1719–1747 (CPICKSTIEKTDGCNHLQCRCGKHICWTC). Cys-1732 is an active-site residue. Positions 1737 and 1739 each coordinate Zn(2+).

Belongs to the DEAD box helicase family. DEAH subfamily.

It is found in the plastid. It localises to the chloroplast. It catalyses the reaction ATP + H2O = ADP + phosphate + H(+). This Arabidopsis thaliana (Mouse-ear cress) protein is ATP-dependent RNA helicase DEAH11, chloroplastic.